The chain runs to 63 residues: Large ribosomal subunit protein uL30 (63 aa).

Belongs to the universal ribosomal protein uL30 family. As to quaternary structure, part of the 50S ribosomal subunit.

This chain is Large ribosomal subunit protein uL30, found in Rickettsia felis (strain ATCC VR-1525 / URRWXCal2) (Rickettsia azadi).